The following is a 383-amino-acid chain: Succinate--CoA ligase [ADP-forming] subunit beta 2 (383 aa).

Residues 9–231 (RELFKEHGIV…QEDADSLEAR (223 aa)) enclose the ATP-grasp domain. Residues K45, 52–54 (GRG), C94, and E99 each bind ATP. The Mg(2+) site is built by N187 and D201. Residues N251 and 308–310 (GIT) each bind substrate.

The protein belongs to the succinate/malate CoA ligase beta subunit family. In terms of assembly, heterotetramer of two alpha and two beta subunits. The cofactor is Mg(2+).

The enzyme catalyses succinate + ATP + CoA = succinyl-CoA + ADP + phosphate. It catalyses the reaction GTP + succinate + CoA = succinyl-CoA + GDP + phosphate. Its pathway is carbohydrate metabolism; tricarboxylic acid cycle; succinate from succinyl-CoA (ligase route): step 1/1. In terms of biological role, succinyl-CoA synthetase functions in the citric acid cycle (TCA), coupling the hydrolysis of succinyl-CoA to the synthesis of either ATP or GTP and thus represents the only step of substrate-level phosphorylation in the TCA. The beta subunit provides nucleotide specificity of the enzyme and binds the substrate succinate, while the binding sites for coenzyme A and phosphate are found in the alpha subunit. The chain is Succinate--CoA ligase [ADP-forming] subunit beta 2 from Streptomyces coelicolor (strain ATCC BAA-471 / A3(2) / M145).